The primary structure comprises 100 residues: Urease subunit gamma (100 aa).

This sequence belongs to the urease gamma subunit family. As to quaternary structure, heterotrimer of UreA (gamma), UreB (beta) and UreC (alpha) subunits. Three heterotrimers associate to form the active enzyme.

It is found in the cytoplasm. It carries out the reaction urea + 2 H2O + H(+) = hydrogencarbonate + 2 NH4(+). The protein operates within nitrogen metabolism; urea degradation; CO(2) and NH(3) from urea (urease route): step 1/1. This Sinorhizobium fredii (strain NBRC 101917 / NGR234) protein is Urease subunit gamma.